Reading from the N-terminus, the 521-residue chain is GRAS family protein RAD1 (521 aa).

A GRAS domain is found at 137–520; sequence DGSCADGMRL…KPIVAVSCWK (384 aa). The leucine repeat I (LRI) stretch occupies residues 144 to 212; that stretch reads MRLVQLLIAC…PIGNNSAGSD (69 aa). Residues 231–301 form a VHIID region; sequence FKLVYENCPH…HRVRRLRITA (71 aa). The short motif at 262-266 is the VHIID element; the sequence is LHVVD. The tract at residues 311–343 is leucine repeat II (LRII); it reads VIGEELSIYAKNLGIHLEFSIVEKNLENLKPKD. Positions 352 to 443 are PFYRE; that stretch reads LVVNSILQLH…QFYFAEEIKN (92 aa). Positions 446-520 are SAW; it reads SCEGPLRMER…KPIVAVSCWK (75 aa).

It belongs to the GRAS family. As to quaternary structure, interacts with RAM1. Interacts with NSP2.

The protein localises to the nucleus. Its function is as follows. Transcription factor acting as a regulator of arbuscular mycorrhiza (AM)-related genes (e.g. STR). Required for the morphogenesis of arbuscules upon symbiosis with AM fungi (e.g. Glomus versiforme). Also involved in restricting mycorrhizal colonization of the root meristem. This Medicago truncatula (Barrel medic) protein is GRAS family protein RAD1.